Reading from the N-terminus, the 226-residue chain is uncharacterized protein (226 aa).

Residues 5–25 form a helical membrane-spanning segment; sequence IKTVSFAAAAILVVIICTFLI.

It is found in the cell membrane. This is an uncharacterized protein from Bacillus subtilis (strain 168).